A 73-amino-acid polypeptide reads, in one-letter code: Metallothionein (73 aa).

Cd(2+)-binding residues include Cys-15, Cys-20, Cys-26, Cys-28, Cys-32, Cys-34, Cys-39, Cys-46, Cys-48, Cys-52, Cys-54, Cys-58, Cys-64, Cys-66, Cys-70, and Cys-72.

This sequence belongs to the metallothionein superfamily. Type 2 family.

In terms of biological role, the metallothioneins are involved in the cellular sequestration of toxic metal ions. This chain is Metallothionein, found in Dreissena polymorpha (Zebra mussel).